The primary structure comprises 146 residues: U-scoloptoxin(16)-Er1a (146 aa).

The N-terminal stretch at 1–26 (MNTVSVVQFLAVGCAVFVLYGRGVFA) is a signal peptide.

It belongs to the scoloptoxin-16 family. In terms of processing, contains 4 disulfide bonds. As to expression, expressed by the venom gland.

Its subcellular location is the secreted. The polypeptide is U-scoloptoxin(16)-Er1a (Ethmostigmus rubripes (Giant centipede)).